A 346-amino-acid chain; its full sequence is uncharacterized protein (346 aa).

A disordered region spans residues 321 to 346; it reads TPWGTHSVAGVGPPPYARSGPASATT.

This is an uncharacterized protein from Mycobacterium tuberculosis (strain CDC 1551 / Oshkosh).